A 363-amino-acid polypeptide reads, in one-letter code: Apelin receptor B (363 aa).

Residues 1-38 (MESEGFSATTEQYEYYDYANETGLQPCDETDWDFSYSL) are Extracellular-facing. An N-linked (GlcNAc...) asparagine glycan is attached at N20. Disulfide bonds link C27–C287 and C109–C186. Residues 39–59 (LPVFYMIVFVLGLSGNGVVIF) form a helical membrane-spanning segment. The Cytoplasmic portion of the chain corresponds to 60-77 (TVWKAKPKRRSADTYIGN). Residues 78-98 (LALADLAFVVTLPLWATYTAL) form a helical membrane-spanning segment. The Extracellular segment spans residues 99-111 (GFHWPFGSALCKL). A helical transmembrane segment spans residues 112–132 (SSYLVLLNMFASVFCLTCLSF). Topologically, residues 133–152 (DRYLAIVHSLSSAKLRSRSS) are cytoplasmic. Residues 153-173 (ILVSLAVIWLFSGLLALPSLI) form a helical membrane-spanning segment. Residues 174–200 (LRDTRVEGNNTICDLDFSGVSSKENEN) are Extracellular-facing. An N-linked (GlcNAc...) asparagine glycan is attached at N182. The chain crosses the membrane as a helical span at residues 201-221 (FWIGGLSILTTVPGFLLPLLL). Residues 222–249 (MTIFYCFIGGKVTMHFQNLKKEEQKKKR) lie on the Cytoplasmic side of the membrane. Residues 250–270 (LLKIIITLVVVFAICWLPFHI) form a helical membrane-spanning segment. At 271–297 (LKTIHFLDLMGFLELSCSAQNIIVSLH) the chain is on the extracellular side. The helical transmembrane segment at 298 to 318 (PYATCLAYVNSCLNPFLYAFF) threads the bilayer. Residues 319-363 (DLRFRSQCFFFFGFKKVLQGHLSNTSSSLSAQTQKSEIHSLATKV) are Cytoplasmic-facing.

The protein belongs to the G-protein coupled receptor 1 family. As to expression, expressed in all blood vessels including the posterior cardinal vein, intersomitic veins and the vitelline vein network.

Its subcellular location is the cell membrane. G protein-coupled receptor for peptide hormones apelin (apln) and apelin receptor early endogenous ligand (apela), that plays a role in the regulation of normal cardiovascular function and fluid homeostasis. When acting as apelin receptor, activates both G(i) protein pathway that inhibits adenylate cyclase activity, and the beta-arrestin pathway that promotes internalization of the receptor. Also functions as mechanoreceptor that is activated by pathological stimuli in a G-protein-independent fashion to induce beta-arrestin signaling, hence eliciting cardiac hypertrophy. However, the presence of apelin ligand blunts cardiac hypertrophic induction from APLNR/APJ on response to pathological stimuli. Plays a key role in early development such as gastrulation, blood vessels formation and heart morphogenesis by acting as a receptor for apela hormone, promoting endoderm and mesendoderm cell migration and regulating the migration of cells fated to become myocardial progenitors, respectively. Promotes angioblast migration toward the embryonic midline, i.e. the position of the future vessel formation, during vasculogenesis. May promote sinus venosus (SV)-derived endothelial cells migration into the developing heart to promote coronary blood vessel development. Required for cardiovascular development, particularly for intersomitic vein angiogenesis by acting as a receptor for apln hormone. Also plays a role in various processes in adults such as regulation of blood vessel formation, blood pressure, heart contractility, and heart failure. Acts upstream of the i/o type of G-alpha proteins in the differentiation of endothelium, erythroid cells, myeloid cells and cardiomyocytes. The chain is Apelin receptor B (aplnr-b) from Xenopus laevis (African clawed frog).